Consider the following 209-residue polypeptide: Small ribosomal subunit protein uS3c (209 aa).

One can recognise a KH type-2 domain in the interval Ile-39–Thr-109.

This sequence belongs to the universal ribosomal protein uS3 family. Part of the 30S ribosomal subunit.

It is found in the plastid. It localises to the chloroplast. The chain is Small ribosomal subunit protein uS3c (rps3) from Gracilaria tenuistipitata (Red alga).